The following is a 203-amino-acid chain: Shikimate kinase (203 aa).

38-43 (GAGKST) is a binding site for ATP. Position 42 (Ser42) interacts with Mg(2+). Positions 60, 84, and 106 each coordinate substrate. Arg144 contacts ATP. Arg163 lines the substrate pocket.

The protein belongs to the shikimate kinase family. In terms of assembly, monomer. Mg(2+) serves as cofactor.

The protein resides in the cytoplasm. It carries out the reaction shikimate + ATP = 3-phosphoshikimate + ADP + H(+). It functions in the pathway metabolic intermediate biosynthesis; chorismate biosynthesis; chorismate from D-erythrose 4-phosphate and phosphoenolpyruvate: step 5/7. Catalyzes the specific phosphorylation of the 3-hydroxyl group of shikimic acid using ATP as a cosubstrate. This is Shikimate kinase from Rhodopseudomonas palustris (strain ATCC BAA-98 / CGA009).